The sequence spans 689 residues: Methionine--tRNA ligase (689 aa).

Positions 15 to 25 match the 'HIGH' region motif; sequence PYANGPIHLGH. Positions 146, 149, 159, and 162 each coordinate Zn(2+). A 'KMSKS' region motif is present at residues 332–336; it reads KMSKS. ATP is bound at residue Lys-335. The 102-residue stretch at 588–689 folds into the tRNA-binding domain; the sequence is DFAKIDLRIA…EGAQPGMRVK (102 aa).

It belongs to the class-I aminoacyl-tRNA synthetase family. MetG type 1 subfamily. As to quaternary structure, homodimer. The cofactor is Zn(2+).

It is found in the cytoplasm. The catalysed reaction is tRNA(Met) + L-methionine + ATP = L-methionyl-tRNA(Met) + AMP + diphosphate. Its function is as follows. Is required not only for elongation of protein synthesis but also for the initiation of all mRNA translation through initiator tRNA(fMet) aminoacylation. The chain is Methionine--tRNA ligase from Shewanella baltica (strain OS223).